Reading from the N-terminus, the 88-residue chain is Small ribosomal subunit protein bS20 (88 aa).

This sequence belongs to the bacterial ribosomal protein bS20 family.

In terms of biological role, binds directly to 16S ribosomal RNA. The polypeptide is Small ribosomal subunit protein bS20 (Chelativorans sp. (strain BNC1)).